A 346-amino-acid polypeptide reads, in one-letter code: Methylthioribose-1-phosphate isomerase (346 aa).

Residues 46–48 (RGA), Arg89, and Gln196 contribute to the substrate site. Catalysis depends on Asp237, which acts as the Proton donor. 247 to 248 (NK) provides a ligand contact to substrate.

Belongs to the eIF-2B alpha/beta/delta subunits family. MtnA subfamily.

It carries out the reaction 5-(methylsulfanyl)-alpha-D-ribose 1-phosphate = 5-(methylsulfanyl)-D-ribulose 1-phosphate. It participates in amino-acid biosynthesis; L-methionine biosynthesis via salvage pathway; L-methionine from S-methyl-5-thio-alpha-D-ribose 1-phosphate: step 1/6. Its function is as follows. Catalyzes the interconversion of methylthioribose-1-phosphate (MTR-1-P) into methylthioribulose-1-phosphate (MTRu-1-P). The polypeptide is Methylthioribose-1-phosphate isomerase (Geobacter sp. (strain M21)).